The sequence spans 385 residues: Protein-glutamate methylesterase/protein-glutamine glutaminase (385 aa).

Aspartate 53 bears the 4-aspartylphosphate mark. Residues 196 to 385 (KHKTGKIIVV…EIADHVLRRS (190 aa)) enclose the CheB-type methylesterase domain. Residues serine 208, histidine 234, and aspartate 330 contribute to the active site.

The protein belongs to the CheB family. In terms of processing, phosphorylated by CheA. Phosphorylation of the N-terminal regulatory domain activates the methylesterase activity.

It is found in the cytoplasm. The enzyme catalyses [protein]-L-glutamate 5-O-methyl ester + H2O = L-glutamyl-[protein] + methanol + H(+). It catalyses the reaction L-glutaminyl-[protein] + H2O = L-glutamyl-[protein] + NH4(+). Its function is as follows. Involved in chemotaxis. Part of a chemotaxis signal transduction system that modulates chemotaxis in response to various stimuli. Catalyzes the demethylation of specific methylglutamate residues introduced into the chemoreceptors (methyl-accepting chemotaxis proteins or MCP) by CheR. Also mediates the irreversible deamidation of specific glutamine residues to glutamic acid. The sequence is that of Protein-glutamate methylesterase/protein-glutamine glutaminase from Borreliella burgdorferi (strain ATCC 35210 / DSM 4680 / CIP 102532 / B31) (Borrelia burgdorferi).